Consider the following 287-residue polypeptide: Urease accessory protein UreD (287 aa).

This sequence belongs to the UreD family. As to quaternary structure, ureD, UreF and UreG form a complex that acts as a GTP-hydrolysis-dependent molecular chaperone, activating the urease apoprotein by helping to assemble the nickel containing metallocenter of UreC. The UreE protein probably delivers the nickel.

Its subcellular location is the cytoplasm. Functionally, required for maturation of urease via the functional incorporation of the urease nickel metallocenter. The chain is Urease accessory protein UreD from Aliivibrio fischeri (strain ATCC 700601 / ES114) (Vibrio fischeri).